Consider the following 309-residue polypeptide: NAD-dependent protein deacylase sirtuin-5B, mitochondrial (309 aa).

The N-terminal 35 residues, 1 to 35 (MILLPFHTRRLVSHVYCGLKPASQNKGIALEMTRP), are a transit peptide targeting the mitochondrion. The Deacetylase sirtuin-type domain occupies 36-306 (SSNLANFREA…PPALARHETE (271 aa)). Position 57–76 (57–76 (GAGVSAESGVPTIIGAGGYW)) interacts with NAD(+). 2 residues coordinate substrate: Y101 and R104. 139 to 142 (QNID) serves as a coordination point for NAD(+). H157 functions as the Proton acceptor in the catalytic mechanism. C165, C168, C206, and C211 together coordinate Zn(2+). NAD(+)-binding positions include 248-250 (GTS), 274-276 (NME), and C292.

The protein belongs to the sirtuin family. Class III subfamily. It depends on Zn(2+) as a cofactor.

It is found in the mitochondrion. The protein localises to the cytoplasm. It localises to the cytosol. Its subcellular location is the nucleus. It catalyses the reaction N(6)-malonyl-L-lysyl-[protein] + NAD(+) + H2O = 2''-O-malonyl-ADP-D-ribose + nicotinamide + L-lysyl-[protein]. The enzyme catalyses N(6)-succinyl-L-lysyl-[protein] + NAD(+) + H2O = 2''-O-succinyl-ADP-D-ribose + nicotinamide + L-lysyl-[protein]. It carries out the reaction N(6)-glutaryl-L-lysyl-[protein] + NAD(+) + H2O = 2''-O-glutaryl-ADP-D-ribose + nicotinamide + L-lysyl-[protein]. Its function is as follows. NAD-dependent lysine demalonylase, desuccinylase and deglutarylase that specifically removes malonyl, succinyl and glutaryl groups on target proteins. Has weak NAD-dependent protein deacetylase activity; however this activity may not be physiologically relevant in vivo. This is NAD-dependent protein deacylase sirtuin-5B, mitochondrial (sirt5-b) from Xenopus laevis (African clawed frog).